The primary structure comprises 203 residues: MASIRLLPSCIVLMFLARSSLCYFITIDAHGEECFHDKVTSGTKMGLIFEVAEGGFLDIDVKIIGPDQKVIYSGERETSGKYTFAAHMDGTYNYCFSNKMSTMTPKVLKFSMDIGEAPKDTSKEDNAGHDKLSEMVSQLSEAMTGVKHEQEYMEVRERIHRSINDNTNSRVVWWSFFESLVLVAMTLGQVYYLKRFFEVRRVV.

The signal sequence occupies residues 1 to 22 (MASIRLLPSCIVLMFLARSSLC). At 23 to 170 (YFITIDAHGE…RSINDNTNSR (148 aa)) the chain is on the lumenal side. In terms of domain architecture, GOLD spans 32–114 (EECFHDKVTS…PKVLKFSMDI (83 aa)). A helical membrane pass occupies residues 171 to 191 (VVWWSFFESLVLVAMTLGQVY). Residues 192–203 (YLKRFFEVRRVV) lie on the Cytoplasmic side of the membrane.

It belongs to the EMP24/GP25L family.

The protein resides in the cytoplasmic vesicle membrane. In terms of biological role, could have a role in the budding of coatomer-coated and other species of coated vesicles. The polypeptide is Transmembrane emp24 domain-containing protein (Nematostella vectensis (Starlet sea anemone)).